We begin with the raw amino-acid sequence, 246 residues long: Carboxylesterase (246 aa).

Catalysis depends on Ser-93, which acts as the Nucleophile. Residues Asp-192 and His-222 each act as charge relay system in the active site.

The protein belongs to the lipase/esterase LIP3/BchO family. In terms of assembly, homodimer.

It catalyses the reaction a carboxylic ester + H2O = an alcohol + a carboxylate + H(+). In terms of biological role, involved in the detoxification of xenobiotics. Shows maximal activity with C6 substrates, with gradually decreasing activity from C8 to C12 substrates. No activity for higher chain length substrates acids rather than long-chain ones. In Geobacillus stearothermophilus (Bacillus stearothermophilus), this protein is Carboxylesterase (est).